The chain runs to 291 residues: Urease accessory protein UreD (291 aa).

The protein belongs to the UreD family. UreD, UreF and UreG form a complex that acts as a GTP-hydrolysis-dependent molecular chaperone, activating the urease apoprotein by helping to assemble the nickel containing metallocenter of UreC. The UreE protein probably delivers the nickel.

The protein resides in the cytoplasm. In terms of biological role, required for maturation of urease via the functional incorporation of the urease nickel metallocenter. The polypeptide is Urease accessory protein UreD (Acinetobacter baumannii (strain SDF)).